The chain runs to 132 residues: Small ribosomal subunit protein uS8 (132 aa).

It belongs to the universal ribosomal protein uS8 family. Part of the 30S ribosomal subunit. Contacts proteins S5 and S12.

In terms of biological role, one of the primary rRNA binding proteins, it binds directly to 16S rRNA central domain where it helps coordinate assembly of the platform of the 30S subunit. This is Small ribosomal subunit protein uS8 from Rhodospirillum rubrum (strain ATCC 11170 / ATH 1.1.1 / DSM 467 / LMG 4362 / NCIMB 8255 / S1).